The following is a 154-amino-acid chain: uncharacterized protein (154 aa).

12–19 (GSSDVGKT) contacts GTP. The G domain maps to 17-112 (GKTTLMENLI…KIPYGIFINK (96 aa)).

It to M.thermoautotrophicum MTH765.

This is an uncharacterized protein from Methanocaldococcus jannaschii (strain ATCC 43067 / DSM 2661 / JAL-1 / JCM 10045 / NBRC 100440) (Methanococcus jannaschii).